The primary structure comprises 316 residues: Acetaldehyde dehydrogenase 3 (316 aa).

12 to 15 (SGNI) contacts NAD(+). Catalysis depends on C132, which acts as the Acyl-thioester intermediate. NAD(+) is bound by residues 163–171 (SAGPGTRAN) and N289.

Belongs to the acetaldehyde dehydrogenase family.

The catalysed reaction is acetaldehyde + NAD(+) + CoA = acetyl-CoA + NADH + H(+). The chain is Acetaldehyde dehydrogenase 3 (mhpF) from Comamonas testosteroni (Pseudomonas testosteroni).